A 377-amino-acid chain; its full sequence is 6-oxocyclohex-1-ene-1-carbonyl-CoA hydrolase (377 aa).

The protein belongs to the enoyl-CoA hydratase/isomerase family. In terms of assembly, homotetramer.

It catalyses the reaction 6-oxocyclohex-1-ene-1-carbonyl-CoA + 2 H2O = 3-hydroxy-6-carboxyhexanoyl-CoA + H(+). It participates in aromatic compound metabolism; benzoyl-CoA degradation. Functionally, involved in the central benzoyl-CoA catabolism. Catalyzes the addition of one molecule of water to the double bond and the hydrolytic cleavage of C-C bond in the alicyclic ring, 6-oxocyclohex-1-ene-1-carbonyl-CoA (6-OCH-CoA) to yield 3-hydroxypimelyl-CoA. This is 6-oxocyclohex-1-ene-1-carbonyl-CoA hydrolase (oah) from Thauera aromatica.